Consider the following 256-residue polypeptide: Small ribosomal subunit protein uS3 (256 aa).

In terms of domain architecture, KH type-2 spans 39-121 (IRTYLTKQLS…TIRINVVEVT (83 aa)). Positions 227–256 (RHEQKFPLQQPKRRQQRRRPTFEDRSAQEA) are disordered. The span at 246–256 (PTFEDRSAQEA) shows a compositional bias: basic and acidic residues.

This sequence belongs to the universal ribosomal protein uS3 family. As to quaternary structure, part of the 30S ribosomal subunit. Forms a tight complex with proteins S10 and S14.

Its function is as follows. Binds the lower part of the 30S subunit head. Binds mRNA in the 70S ribosome, positioning it for translation. The sequence is that of Small ribosomal subunit protein uS3 from Synechococcus sp. (strain JA-2-3B'a(2-13)) (Cyanobacteria bacterium Yellowstone B-Prime).